A 444-amino-acid polypeptide reads, in one-letter code: Methylenetetrahydrofolate--tRNA-(uracil-5-)-methyltransferase TrmFO (444 aa).

Gly10–Gly15 provides a ligand contact to FAD.

This sequence belongs to the MnmG family. TrmFO subfamily. FAD serves as cofactor.

The protein resides in the cytoplasm. The enzyme catalyses uridine(54) in tRNA + (6R)-5,10-methylene-5,6,7,8-tetrahydrofolate + NADH + H(+) = 5-methyluridine(54) in tRNA + (6S)-5,6,7,8-tetrahydrofolate + NAD(+). The catalysed reaction is uridine(54) in tRNA + (6R)-5,10-methylene-5,6,7,8-tetrahydrofolate + NADPH + H(+) = 5-methyluridine(54) in tRNA + (6S)-5,6,7,8-tetrahydrofolate + NADP(+). Catalyzes the folate-dependent formation of 5-methyl-uridine at position 54 (M-5-U54) in all tRNAs. The polypeptide is Methylenetetrahydrofolate--tRNA-(uracil-5-)-methyltransferase TrmFO (Streptococcus mutans serotype c (strain ATCC 700610 / UA159)).